We begin with the raw amino-acid sequence, 338 residues long: Phosphoribosylformylglycinamidine cyclo-ligase (338 aa).

Belongs to the AIR synthase family.

The protein resides in the cytoplasm. The catalysed reaction is 2-formamido-N(1)-(5-O-phospho-beta-D-ribosyl)acetamidine + ATP = 5-amino-1-(5-phospho-beta-D-ribosyl)imidazole + ADP + phosphate + H(+). The protein operates within purine metabolism; IMP biosynthesis via de novo pathway; 5-amino-1-(5-phospho-D-ribosyl)imidazole from N(2)-formyl-N(1)-(5-phospho-D-ribosyl)glycinamide: step 2/2. The polypeptide is Phosphoribosylformylglycinamidine cyclo-ligase (Thermoplasma acidophilum (strain ATCC 25905 / DSM 1728 / JCM 9062 / NBRC 15155 / AMRC-C165)).